A 248-amino-acid polypeptide reads, in one-letter code: Probable transcriptional regulatory protein Noc_0137 (248 aa).

This sequence belongs to the TACO1 family.

It is found in the cytoplasm. This chain is Probable transcriptional regulatory protein Noc_0137, found in Nitrosococcus oceani (strain ATCC 19707 / BCRC 17464 / JCM 30415 / NCIMB 11848 / C-107).